A 377-amino-acid polypeptide reads, in one-letter code: Sterol 24-C-methyltransferase erg6 (377 aa).

The protein belongs to the class I-like SAM-binding methyltransferase superfamily. Erg6/SMT family.

Its subcellular location is the microsome. It localises to the mitochondrion. It carries out the reaction lanosterol + S-adenosyl-L-methionine = eburicol + S-adenosyl-L-homocysteine + H(+). It participates in steroid metabolism; ergosterol biosynthesis. Specific and total activity is decreased in presence of alpha-bisabolol. Its function is as follows. Sterol 24-C-methyltransferase; part of the third module of ergosterol biosynthesis pathway that includes the late steps of the pathway. Methylates lanosterol at C-24 to produce eburicol. The third module or late pathway involves the ergosterol synthesis itself through consecutive reactions that mainly occur in the endoplasmic reticulum (ER) membrane. Firstly, the squalene synthase erg9 catalyzes the condensation of 2 farnesyl pyrophosphate moieties to form squalene, which is the precursor of all steroids. Squalene synthase is crucial for balancing the incorporation of farnesyl diphosphate (FPP) into sterol and nonsterol isoprene synthesis. Secondly, squalene is converted into lanosterol by the consecutive action of the squalene epoxidase erg1 and the lanosterol synthase erg7. Then, the delta(24)-sterol C-methyltransferase erg6 methylates lanosterol at C-24 to produce eburicol. Eburicol is the substrate of the sterol 14-alpha demethylase encoded by cyp51A and cyp51B, to yield 4,4,24-trimethyl ergosta-8,14,24(28)-trienol. The C-14 reductase erg24 then reduces the C14=C15 double bond which leads to 4,4-dimethylfecosterol. A sequence of further demethylations at C-4, involving the C-4 demethylation complex containing the C-4 methylsterol oxidases erg25A or erg25B, the sterol-4-alpha-carboxylate 3-dehydrogenase erg26 and the 3-keto-steroid reductase erg27, leads to the production of fecosterol via 4-methylfecosterol. The C-8 sterol isomerase erg2 then catalyzes the reaction which results in unsaturation at C-7 in the B ring of sterols and thus converts fecosterol to episterol. The sterol-C5-desaturase erg3B then catalyzes the introduction of a C-5 double bond in the B ring to produce 5-dehydroepisterol. The 2 other sterol-C5-desaturases, erg3A and erg3C, seem to be less important in ergosterol biosynthesis. The C-22 sterol desaturase erg5 further converts 5-dehydroepisterol into ergosta-5,7,22,24(28)-tetraen-3beta-ol by forming the C-22(23) double bond in the sterol side chain. Finally, ergosta-5,7,22,24(28)-tetraen-3beta-ol is substrate of the C-24(28) sterol reductases erg4A and erg4B to produce ergosterol. Possible alternative sterol biosynthetic pathways might exist from fecosterol to ergosterol, depending on the activities of the erg3 isoforms. This chain is Sterol 24-C-methyltransferase erg6, found in Aspergillus fumigatus (strain ATCC MYA-4609 / CBS 101355 / FGSC A1100 / Af293) (Neosartorya fumigata).